We begin with the raw amino-acid sequence, 464 residues long: Macrophage metalloelastase (464 aa).

An N-terminal signal peptide occupies residues 1 to 17 (MKFLLLILTLWVTSSGA). Positions 18–100 (DPLKENDMLF…DVYHFKTMPG (83 aa)) are cleaved as a propeptide — activation peptide. Asparagine 69 is a glycosylation site (N-linked (GlcNAc...) asparagine). A Cysteine switch motif is present at residues 85-92 (PRCGVPDV). Cysteine 87 provides a ligand contact to Zn(2+). Ca(2+)-binding residues include aspartate 119 and aspartate 153. Residues histidine 163 and aspartate 165 each contribute to the Zn(2+) site. The Ca(2+) site is built by aspartate 170, glycine 171, glycine 173, and valine 175. Residue histidine 178 coordinates Zn(2+). Ca(2+) contacts are provided by glycine 185, glycine 187, and aspartate 189. Histidine 191 contacts Zn(2+). Positions 193, 194, and 196 each coordinate Ca(2+). Zn(2+) is bound at residue histidine 213. Residue glutamate 214 is part of the active site. Residues histidine 217 and histidine 223 each coordinate Zn(2+). Hemopexin repeat units follow at residues 274 to 323 (PTAC…WPTL), 324 to 370 (PSGI…GFPD), 372 to 420 (VKKI…FPGI), and 421 to 464 (GPKI…WFDC). Residues cysteine 277 and cysteine 464 are joined by a disulfide bond. Residues aspartate 284, glutamate 328, aspartate 376, and aspartate 425 each coordinate Ca(2+).

Belongs to the peptidase M10A family. Ca(2+) is required as a cofactor. Zn(2+) serves as cofactor.

It localises to the secreted. Its subcellular location is the extracellular space. It is found in the extracellular matrix. It carries out the reaction Hydrolysis of soluble and insoluble elastin. Specific cleavages are also produced at 14-Ala-|-Leu-15 and 16-Tyr-|-Leu-17 in the B chain of insulin.. Functionally, may be involved in tissue injury and remodeling. Has significant elastolytic activity. Can accept large and small amino acids at the P1' site, but has a preference for leucine. Aromatic or hydrophobic residues are preferred at the P1 site, with small hydrophobic residues (preferably alanine) occupying P3. This Oryctolagus cuniculus (Rabbit) protein is Macrophage metalloelastase (MMP12).